Reading from the N-terminus, the 461-residue chain is Bifunctional protein HldE (461 aa).

Residues 1–312 (MLEFLSQQKP…IKSFNRVDFE (312 aa)) form a ribokinase region. 191 to 194 (NKKE) provides a ligand contact to ATP. Asp-259 is an active-site residue. The cytidylyltransferase stretch occupies residues 334 to 461 (FTNGCFDIVH…KIIEKIKDKK (128 aa)).

In the N-terminal section; belongs to the carbohydrate kinase PfkB family. It in the C-terminal section; belongs to the cytidylyltransferase family. As to quaternary structure, homodimer.

The enzyme catalyses D-glycero-beta-D-manno-heptose 7-phosphate + ATP = D-glycero-beta-D-manno-heptose 1,7-bisphosphate + ADP + H(+). It catalyses the reaction D-glycero-beta-D-manno-heptose 1-phosphate + ATP + H(+) = ADP-D-glycero-beta-D-manno-heptose + diphosphate. Its pathway is nucleotide-sugar biosynthesis; ADP-L-glycero-beta-D-manno-heptose biosynthesis; ADP-L-glycero-beta-D-manno-heptose from D-glycero-beta-D-manno-heptose 7-phosphate: step 1/4. It functions in the pathway nucleotide-sugar biosynthesis; ADP-L-glycero-beta-D-manno-heptose biosynthesis; ADP-L-glycero-beta-D-manno-heptose from D-glycero-beta-D-manno-heptose 7-phosphate: step 3/4. Its function is as follows. Catalyzes the phosphorylation of D-glycero-D-manno-heptose 7-phosphate at the C-1 position to selectively form D-glycero-beta-D-manno-heptose-1,7-bisphosphate. In terms of biological role, catalyzes the ADP transfer from ATP to D-glycero-beta-D-manno-heptose 1-phosphate, yielding ADP-D-glycero-beta-D-manno-heptose. The sequence is that of Bifunctional protein HldE from Campylobacter jejuni subsp. doylei (strain ATCC BAA-1458 / RM4099 / 269.97).